Reading from the N-terminus, the 297-residue chain is Bifunctional protein FolD (297 aa).

NADP(+) contacts are provided by residues 166–168, Ser191, and Ile232; that span reads GRS.

The protein belongs to the tetrahydrofolate dehydrogenase/cyclohydrolase family. As to quaternary structure, homodimer.

The enzyme catalyses (6R)-5,10-methylene-5,6,7,8-tetrahydrofolate + NADP(+) = (6R)-5,10-methenyltetrahydrofolate + NADPH. It carries out the reaction (6R)-5,10-methenyltetrahydrofolate + H2O = (6R)-10-formyltetrahydrofolate + H(+). The protein operates within one-carbon metabolism; tetrahydrofolate interconversion. Its function is as follows. Catalyzes the oxidation of 5,10-methylenetetrahydrofolate to 5,10-methenyltetrahydrofolate and then the hydrolysis of 5,10-methenyltetrahydrofolate to 10-formyltetrahydrofolate. This chain is Bifunctional protein FolD, found in Phenylobacterium zucineum (strain HLK1).